A 985-amino-acid polypeptide reads, in one-letter code: Alanine--tRNA ligase, mitochondrial (985 aa).

A mitochondrion-targeting transit peptide spans 1 to 23 (MAASVAAAAGRLRRAIGRSCPWQ). Residues Arg-105, His-123, Trp-205, and 235–237 (LWN) contribute to the ATP site. Asn-237 and Asp-260 together coordinate L-alanine. Gly-264 contributes to the ATP binding site. Positions 632, 636, 749, and 753 each coordinate Zn(2+).

The protein belongs to the class-II aminoacyl-tRNA synthetase family. As to quaternary structure, monomer. Requires Zn(2+) as cofactor.

The protein localises to the mitochondrion. The catalysed reaction is tRNA(Ala) + L-alanine + ATP = L-alanyl-tRNA(Ala) + AMP + diphosphate. It catalyses the reaction (S)-lactate + ATP + H(+) = (S)-lactoyl-AMP + diphosphate. It carries out the reaction (S)-lactoyl-AMP + L-lysyl-[protein] = N(6)-[(S)-lactoyl]-L-lysyl-[protein] + AMP + 2 H(+). Its function is as follows. Catalyzes the attachment of alanine to tRNA(Ala) in a two-step reaction: alanine is first activated by ATP to form Ala-AMP and then transferred to the acceptor end of tRNA(Ala). Also edits incorrectly charged tRNA(Ala) via its editing domain. In presence of high levels of lactate, also acts as a protein lactyltransferase that mediates lactylation of lysine residues in target proteins, such as CGAS. Acts as an inhibitor of cGAS/STING signaling by catalyzing lactylation of CGAS, preventing the formation of liquid-like droplets in which CGAS is activated. The chain is Alanine--tRNA ligase, mitochondrial (Aars2) from Rattus norvegicus (Rat).